A 288-amino-acid chain; its full sequence is Polyamine aminopropyltransferase (288 aa).

The 230-residue stretch at 9 to 238 folds into the PABS domain; it reads ETLHDQFGQY…GIMTFAWATD (230 aa). Residue Gln-33 coordinates S-methyl-5'-thioadenosine. Positions 64 and 88 each coordinate spermidine. Residues Glu-108 and 140-141 contribute to the S-methyl-5'-thioadenosine site; that span reads DG. The active-site Proton acceptor is Asp-158. 158-161 is a binding site for spermidine; sequence DCTD. Pro-165 contacts S-methyl-5'-thioadenosine.

This sequence belongs to the spermidine/spermine synthase family. As to quaternary structure, homodimer or homotetramer.

Its subcellular location is the cytoplasm. It carries out the reaction S-adenosyl 3-(methylsulfanyl)propylamine + putrescine = S-methyl-5'-thioadenosine + spermidine + H(+). It participates in amine and polyamine biosynthesis; spermidine biosynthesis; spermidine from putrescine: step 1/1. Functionally, catalyzes the irreversible transfer of a propylamine group from the amino donor S-adenosylmethioninamine (decarboxy-AdoMet) to putrescine (1,4-diaminobutane) to yield spermidine. The protein is Polyamine aminopropyltransferase of Escherichia fergusonii (strain ATCC 35469 / DSM 13698 / CCUG 18766 / IAM 14443 / JCM 21226 / LMG 7866 / NBRC 102419 / NCTC 12128 / CDC 0568-73).